A 181-amino-acid chain; its full sequence is Acireductone dioxygenase 2 (181 aa).

Fe(2+) is bound by residues His97, His99, Glu103, and His141. Ni(2+) contacts are provided by His97, His99, Glu103, and His141.

It belongs to the acireductone dioxygenase (ARD) family. As to quaternary structure, monomer. Fe(2+) serves as cofactor. The cofactor is Ni(2+).

It catalyses the reaction 1,2-dihydroxy-5-(methylsulfanyl)pent-1-en-3-one + O2 = 3-(methylsulfanyl)propanoate + CO + formate + 2 H(+). The enzyme catalyses 1,2-dihydroxy-5-(methylsulfanyl)pent-1-en-3-one + O2 = 4-methylsulfanyl-2-oxobutanoate + formate + 2 H(+). Its pathway is amino-acid biosynthesis; L-methionine biosynthesis via salvage pathway; L-methionine from S-methyl-5-thio-alpha-D-ribose 1-phosphate: step 5/6. Catalyzes 2 different reactions between oxygen and the acireductone 1,2-dihydroxy-3-keto-5-methylthiopentene (DHK-MTPene) depending upon the metal bound in the active site. Fe-containing acireductone dioxygenase (Fe-ARD) produces formate and 2-keto-4-methylthiobutyrate (KMTB), the alpha-ketoacid precursor of methionine in the methionine recycle pathway. Ni-containing acireductone dioxygenase (Ni-ARD) produces methylthiopropionate, carbon monoxide and formate, and does not lie on the methionine recycle pathway. The sequence is that of Acireductone dioxygenase 2 from Pectobacterium atrosepticum (strain SCRI 1043 / ATCC BAA-672) (Erwinia carotovora subsp. atroseptica).